A 567-amino-acid chain; its full sequence is Major facilitator superfamily transporter MG061 (567 aa).

12 helical membrane-spanning segments follow: residues 15–35 (ITLWIIVIFGYLLFVVEWFVI), 78–98 (WTITLLRAVGSILCGVVVLKF), 104–124 (VLIMMGIMCVCFPFLIIGDPL), 193–213 (GYALFIIFRSTIAIGGTTLVV), 230–250 (ILSNANLWGFNIGIAVVFTPF), 264–284 (VYIMTVMILVVFANLCLFLWF), 321–341 (LIGVYGIVLILIVNPLTPAWF), 363–383 (TGLATLAIFWVIGYALGFVVF), 405–425 (IVVLLIIIMFAATLGIGSAAG), 426–446 (FALISIFSFIGGAFAWSLSSS), 462–482 (LPILFGFCWGFGYIAYTLFDI), and 503–523 (PGVIVSIVFFLGLIALANLIV).

The protein belongs to the major facilitator superfamily.

It localises to the cell membrane. In Mycoplasma genitalium (strain ATCC 33530 / DSM 19775 / NCTC 10195 / G37) (Mycoplasmoides genitalium), this protein is Major facilitator superfamily transporter MG061.